We begin with the raw amino-acid sequence, 74 residues long: RNA-binding protein Hfq (74 aa).

Positions 9–69 (DQFLNQLRKE…ISTFAPQKNV (61 aa)) constitute a Sm domain.

The protein belongs to the Hfq family. Homohexamer.

RNA chaperone that binds small regulatory RNA (sRNAs) and mRNAs to facilitate mRNA translational regulation in response to envelope stress, environmental stress and changes in metabolite concentrations. Also binds with high specificity to tRNAs. In Anoxybacillus flavithermus (strain DSM 21510 / WK1), this protein is RNA-binding protein Hfq.